The following is an 801-amino-acid chain: Elongation factor G, mitochondrial (801 aa).

The N-terminal 24 residues, 1–24, are a transit peptide targeting the mitochondrion; sequence MRCPSLARLPHRAISGLTRLPVRL. The tr-type G domain occupies 99–386; that stretch reads SRIRNIGIAA…GVIDYLPNPS (288 aa). Residues 108–115, 184–188, and 238–241 each bind GTP; these read AHIDSGKT, DTPGH, and NKMD.

This sequence belongs to the TRAFAC class translation factor GTPase superfamily. Classic translation factor GTPase family. EF-G/EF-2 subfamily.

It localises to the mitochondrion. The protein operates within protein biosynthesis; polypeptide chain elongation. Functionally, mitochondrial GTPase that catalyzes the GTP-dependent ribosomal translocation step during translation elongation. During this step, the ribosome changes from the pre-translocational (PRE) to the post-translocational (POST) state as the newly formed A-site-bound peptidyl-tRNA and P-site-bound deacylated tRNA move to the P and E sites, respectively. Catalyzes the coordinated movement of the two tRNA molecules, the mRNA and conformational changes in the ribosome. This is Elongation factor G, mitochondrial (mef1) from Aspergillus clavatus (strain ATCC 1007 / CBS 513.65 / DSM 816 / NCTC 3887 / NRRL 1 / QM 1276 / 107).